Reading from the N-terminus, the 220-residue chain is Large ribosomal subunit protein uL16 (220 aa).

This sequence belongs to the universal ribosomal protein uL16 family. In terms of assembly, component of the small ribosomal subunit. Mature ribosomes consist of a small (40S) and a large (60S) subunit. The 40S subunit contains about 33 different proteins and 1 molecule of RNA (18S). The 60S subunit contains about 49 different proteins and 3 molecules of RNA (25S, 5.8S and 5S).

This Euphorbia esula (Leafy spurge) protein is Large ribosomal subunit protein uL16 (RPL10).